The sequence spans 209 residues: MREIVSADDALRKLLEKACKFNESVDVAVHFFSKDSVKIGCVFKYPFYFGRVLVFCGEPQMAQVIDENVTYGGEELIERIKAKKNFVKGYKYSLASPPMMSKLSKIARILGPRGLMPDSKYGLVTHDIAAAVTAILGGKALFKTNKAGVMHSKIGNLGMGFDKLRENFQIFCESVFATRPKNVSLQSYVRSISVSSTMGDGCFVDFLAL.

Belongs to the universal ribosomal protein uL1 family. In terms of assembly, part of the 50S ribosomal subunit.

In terms of biological role, binds directly to 23S rRNA. The L1 stalk is quite mobile in the ribosome, and is involved in E site tRNA release. Protein L1 is also a translational repressor protein, it controls the translation of the L11 operon by binding to its mRNA. This is Large ribosomal subunit protein uL1 (rplA) from Neorickettsia sennetsu (strain ATCC VR-367 / Miyayama) (Ehrlichia sennetsu).